Reading from the N-terminus, the 349-residue chain is Dipeptide transport ATP-binding protein DppD (349 aa).

The ABC transporter domain maps to 7 to 258; the sequence is LEVKNLHVNF…PQHPYTWGLL (252 aa). 43 to 50 serves as a coordination point for ATP; the sequence is GESGSGKS.

The protein belongs to the ABC transporter superfamily. As to quaternary structure, the complex is composed of two ATP-binding proteins (DppD and DppF), two transmembrane proteins (DppB and DppC) and a solute-binding protein (DppA).

The protein resides in the cell membrane. It carries out the reaction a dipeptide(out) + ATP + H2O = a dipeptide(in) + ADP + phosphate + H(+). Functionally, part of the ABC transporter DppABCDF involved in dipeptide transport. Responsible for energy coupling to the transport system. The chain is Dipeptide transport ATP-binding protein DppD from Lactococcus lactis subsp. cremoris (strain MG1363).